The chain runs to 427 residues: MLDVKLLRNNFEEVKQKLQNRGEDLGEFEKFGELDKRRRTLIVETEALKSQRNEVSQEIAKLKREKQDADAKIEEMRVVGDRIKTLDIELREIDEKLDTILMSIPNIPHESTPVGESEDDNVEIRKWGEVREFDFEPKAHWDLGTDLDILDFENAAKVTGSRFVFYKKLGARLERALINFMMDLHSNEHGYEEMLPPYMVNRASMTGTGQLPKFEEDAFLIEAEDYFLIPTAEVPVTNYHREDILKAEDLPRKYTAFSACFRSEAGSAGRDTRGLIRQHQFNKVELVQFVKPEDSYAALEKLTGCAEEVLRRLELPYRVLSMCTADLGFTAAKKYDLEVWIPSYDSYREISSCSNFESFQARRANIRFRREPGSKPEYVHTLNGSGLALGRTVAAILENYQEADGSVLIPKVLQGYMGGIEKIELPK.

An L-serine-binding site is contributed by 231 to 233 (TAE). 262–264 (RSE) is an ATP binding site. An L-serine-binding site is contributed by Glu285. 349–352 (EISS) contributes to the ATP binding site. Ser385 serves as a coordination point for L-serine.

It belongs to the class-II aminoacyl-tRNA synthetase family. Type-1 seryl-tRNA synthetase subfamily. In terms of assembly, homodimer. The tRNA molecule binds across the dimer.

The protein localises to the cytoplasm. It catalyses the reaction tRNA(Ser) + L-serine + ATP = L-seryl-tRNA(Ser) + AMP + diphosphate + H(+). It carries out the reaction tRNA(Sec) + L-serine + ATP = L-seryl-tRNA(Sec) + AMP + diphosphate + H(+). It functions in the pathway aminoacyl-tRNA biosynthesis; selenocysteinyl-tRNA(Sec) biosynthesis; L-seryl-tRNA(Sec) from L-serine and tRNA(Sec): step 1/1. Its function is as follows. Catalyzes the attachment of serine to tRNA(Ser). Is also able to aminoacylate tRNA(Sec) with serine, to form the misacylated tRNA L-seryl-tRNA(Sec), which will be further converted into selenocysteinyl-tRNA(Sec). The chain is Serine--tRNA ligase from Listeria innocua serovar 6a (strain ATCC BAA-680 / CLIP 11262).